The primary structure comprises 347 residues: UDP-N-acetylenolpyruvoylglucosamine reductase (347 aa).

The FAD-binding PCMH-type domain occupies 24–195; that stretch reads FDARARVAAR…VAVTFRLPKA (172 aa). R171 is an active-site residue. The Proton donor role is filled by S247. The active site involves E343.

The protein belongs to the MurB family. FAD serves as cofactor.

The protein resides in the cytoplasm. It carries out the reaction UDP-N-acetyl-alpha-D-muramate + NADP(+) = UDP-N-acetyl-3-O-(1-carboxyvinyl)-alpha-D-glucosamine + NADPH + H(+). It participates in cell wall biogenesis; peptidoglycan biosynthesis. In terms of biological role, cell wall formation. The protein is UDP-N-acetylenolpyruvoylglucosamine reductase of Burkholderia pseudomallei (strain 668).